The primary structure comprises 313 residues: tRNA pseudouridine synthase B (313 aa).

The active-site Nucleophile is the aspartate 42.

It belongs to the pseudouridine synthase TruB family. Type 1 subfamily.

The catalysed reaction is uridine(55) in tRNA = pseudouridine(55) in tRNA. Its function is as follows. Responsible for synthesis of pseudouridine from uracil-55 in the psi GC loop of transfer RNAs. The sequence is that of tRNA pseudouridine synthase B from Prochlorococcus marinus (strain SARG / CCMP1375 / SS120).